Here is a 206-residue protein sequence, read N- to C-terminus: HTH-type transcriptional regulator Hpr (206 aa).

An HTH marR-type domain is found at 13–157; the sequence is ALLFSQRMAQ…MMCIIRNIYG (145 aa). Positions 63–86 form a DNA-binding region, H-T-H motif; the sequence is ISEIAKFGVMHVSTAFNFSKKLEE. The disordered stretch occupies residues 186–206; it reads SEELEDSADAAEKAAKANQIV.

Homodimer.

In terms of biological role, negative regulator of protease production and sporulation. The polypeptide is HTH-type transcriptional regulator Hpr (Bacillus pumilus (strain SAFR-032)).